The chain runs to 475 residues: Chromosomal replication initiator protein DnaA (475 aa).

Residues methionine 1–aspartate 73 form a domain I, interacts with DnaA modulators region. A domain II region spans residues aspartate 73 to serine 131. The domain III, AAA+ region stretch occupies residues proline 132–serine 354. ATP-binding residues include glycine 179, glycine 181, lysine 182, and threonine 183. Positions lysine 355–glutamate 475 are domain IV, binds dsDNA.

Belongs to the DnaA family. In terms of assembly, oligomerizes as a right-handed, spiral filament on DNA at oriC.

It is found in the cytoplasm. Functionally, plays an essential role in the initiation and regulation of chromosomal replication. ATP-DnaA binds to the origin of replication (oriC) to initiate formation of the DNA replication initiation complex once per cell cycle. Binds the DnaA box (a 9 base pair repeat at the origin) and separates the double-stranded (ds)DNA. Forms a right-handed helical filament on oriC DNA; dsDNA binds to the exterior of the filament while single-stranded (ss)DNA is stabiized in the filament's interior. The ATP-DnaA-oriC complex binds and stabilizes one strand of the AT-rich DNA unwinding element (DUE), permitting loading of DNA polymerase. After initiation quickly degrades to an ADP-DnaA complex that is not apt for DNA replication. Binds acidic phospholipids. The sequence is that of Chromosomal replication initiator protein DnaA from Nitrobacter winogradskyi (strain ATCC 25391 / DSM 10237 / CIP 104748 / NCIMB 11846 / Nb-255).